A 358-amino-acid chain; its full sequence is E3 ubiquitin-protein ligase SIS3 (358 aa).

The N-terminal stretch at 1–27 is a signal peptide; sequence MAMRGVDFKWYDGFFLSMLATSVIIVA. 3 helical membrane-spanning segments follow: residues 40–60, 85–105, and 125–145; these read LHIWIVVDYTTVFIFRVFMFV, VVVLSVLSLLLYPFLWAWTVI, and GFLIWLMFSYCGLLCIAFICV. The RING-type; atypical zinc finger occupies 235–276; the sequence is CLICLEEFHIGHEVRGLPCAHNFHVECIDQWLRLNVKCPRCR. The tract at residues 336–358 is disordered; that stretch reads TALETAENGGVPPVLTDLSPSRR.

As to expression, expressed in roots, stems, leaves, flowers and siliques.

The protein localises to the membrane. It catalyses the reaction S-ubiquitinyl-[E2 ubiquitin-conjugating enzyme]-L-cysteine + [acceptor protein]-L-lysine = [E2 ubiquitin-conjugating enzyme]-L-cysteine + N(6)-ubiquitinyl-[acceptor protein]-L-lysine.. The protein operates within protein modification; protein ubiquitination. Functionally, E3 ubiquitin protein ligase that acts as a positive regulator of sugar signaling during early seedling development. Possesses E3 ligase activity in vitro. The protein is E3 ubiquitin-protein ligase SIS3 (SIS3) of Arabidopsis thaliana (Mouse-ear cress).